We begin with the raw amino-acid sequence, 286 residues long: Bifunctional protein FolD (286 aa).

NADP(+) is bound by residues 165–167, S190, and V231; that span reads GRS.

Belongs to the tetrahydrofolate dehydrogenase/cyclohydrolase family. Homodimer.

The catalysed reaction is (6R)-5,10-methylene-5,6,7,8-tetrahydrofolate + NADP(+) = (6R)-5,10-methenyltetrahydrofolate + NADPH. The enzyme catalyses (6R)-5,10-methenyltetrahydrofolate + H2O = (6R)-10-formyltetrahydrofolate + H(+). The protein operates within one-carbon metabolism; tetrahydrofolate interconversion. Catalyzes the oxidation of 5,10-methylenetetrahydrofolate to 5,10-methenyltetrahydrofolate and then the hydrolysis of 5,10-methenyltetrahydrofolate to 10-formyltetrahydrofolate. This Bacillus thuringiensis (strain Al Hakam) protein is Bifunctional protein FolD.